A 218-amino-acid polypeptide reads, in one-letter code: Glutathione S-transferase Mu 1 (218 aa).

In terms of domain architecture, GST N-terminal spans 2–88 (PMILGYWNVR…YLARKHHLCG (87 aa)). Glutathione is bound by residues 7 to 8 (YW), 43 to 46 (RSQW), Lys50, and 59 to 60 (NL). At Ser67 the chain carries Phosphoserine. 72–73 (QS) contributes to the glutathione binding site. The GST C-terminal domain maps to 90–208 (TEEERIRADI…KSSRYLSTPI (119 aa)). Residue Tyr116 coordinates substrate. Phosphoserine occurs at positions 205 and 210.

The protein belongs to the GST superfamily. Mu family. In terms of assembly, homodimer or heterodimer.

It localises to the cytoplasm. The enzyme catalyses RX + glutathione = an S-substituted glutathione + a halide anion + H(+). The catalysed reaction is prostaglandin A2 + glutathione = prostaglandin A2-S-(R)-glutathione. It carries out the reaction prostaglandin J2 + glutathione = prostaglandin J2-S-(R)-glutathione. It catalyses the reaction prostaglandin J2 + glutathione = prostaglandin J2-S-(S)-glutathione. The enzyme catalyses prostaglandin A2 + glutathione = prostaglandin A2-S-(S)-glutathione. The catalysed reaction is 11(S)-hydroxy-14(S),15(S)-epoxy-(5Z,8Z,12E)-eicosatrienoate + glutathione = (11S,15S)-dihydroxy-14(R)-S-glutathionyl-(5Z,8Z,12E)-eicosatrienoate. In terms of biological role, conjugation of reduced glutathione to a wide number of exogenous and endogenous hydrophobic electrophiles. The olfactory GST may be crucial for the acuity of the olfactory process. Participates in the formation of novel hepoxilin regioisomers. The sequence is that of Glutathione S-transferase Mu 1 from Rattus norvegicus (Rat).